The chain runs to 252 residues: Chitooligosaccharide deacetylase (252 aa).

The Mg(2+) site is built by His61 and His125.

The protein belongs to the YdjC deacetylase family. ChbG subfamily. As to quaternary structure, homodimer. The cofactor is Mg(2+).

It localises to the cytoplasm. It carries out the reaction N,N'-diacetylchitobiose + H2O = N-acetyl-beta-D-glucosaminyl-(1-&gt;4)-D-glucosamine + acetate. It catalyses the reaction diacetylchitobiose-6'-phosphate + H2O = N'-monoacetylchitobiose-6'-phosphate + acetate. It functions in the pathway glycan degradation; chitin degradation. Involved in the degradation of chitin. ChbG is essential for growth on the acetylated chitooligosaccharides chitobiose and chitotriose but is dispensable for growth on cellobiose and chitosan dimer, the deacetylated form of chitobiose. Deacetylation of chitobiose-6-P and chitotriose-6-P is necessary for both the activation of the chb promoter by the regulatory protein ChbR and the hydrolysis of phosphorylated beta-glucosides by the phospho-beta-glucosidase ChbF. Catalyzes the removal of only one acetyl group from chitobiose-6-P to yield monoacetylchitobiose-6-P, the inducer of ChbR and the substrate of ChbF. The polypeptide is Chitooligosaccharide deacetylase (Salmonella enteritidis PT4 (strain P125109)).